Reading from the N-terminus, the 286-residue chain is Pheromone receptor transcription factor (286 aa).

Position 2 is an N-acetylserine (S2). At S2 the chain carries Phosphoserine. Residues 18–72 form the MADS-box domain; it reads RRKIEIKFIENKTRRHVTFSKRKHGIMKKAFELSVLTGTQVLLLVVSETGLVYTF. Positions 97–119 are enriched in acidic residues; it reads PDDEEEDEEEDGDDDDDDDDDGN. Residues 97–137 form a disordered region; the sequence is PDDEEEDEEEDGDDDDDDDDDGNDMQRQQPQQQQPQQQQQV. The segment covering 122–136 has biased composition (low complexity); that stretch reads QRQQPQQQQPQQQQQ. S144 bears the Phosphoserine mark. Positions 167 to 264 are disordered; the sequence is LGGANPNQNS…QQAFANAASP (98 aa). The segment covering 171 to 246 has biased composition (low complexity); that stretch reads NPNQNSMIQQ…QQQQQQQQQP (76 aa).

As to quaternary structure, homodimer. Binds DNA with a high specificity in complex with mating-type protein ALPHA1. Also binds DNA with a high specificity as a heterotetramer consisting of an ALPHA2 dimer and an MCM1 dimer. Interacts with YHP1 and YOX1, possibly leading to its inactivation. Interacts with ARG80 and ARG82.

It localises to the nucleus. Functionally, transcription factor required for the efficient replication of minichromosomes and the transcriptional regulation of early cell cycle genes. Activates transcription of ECB-dependent genes during the G1/M phase. Genes that contain a ECB (early cell box) element in their transcription regulatory region are transcribed only during G1/M phases. Interacts with the alpha-2 repressor or with the alpha-1 activator thereby regulating the expression of mating-type-specific genes. With ARG80, ARG81 and ARG82, coordinates the expression of arginine anabolic and catabolic genes in response to arginine. The polypeptide is Pheromone receptor transcription factor (MCM1) (Saccharomyces cerevisiae (strain ATCC 204508 / S288c) (Baker's yeast)).